A 258-amino-acid chain; its full sequence is Phosphate import ATP-binding protein PstB 2 (258 aa).

One can recognise an ABC transporter domain in the interval 12 to 253 (IQVRDLNFYY…PRQKQTEDYI (242 aa)). 44–51 (GPSGCGKS) lines the ATP pocket.

The protein belongs to the ABC transporter superfamily. Phosphate importer (TC 3.A.1.7) family. As to quaternary structure, the complex is composed of two ATP-binding proteins (PstB), two transmembrane proteins (PstC and PstA) and a solute-binding protein (PstS).

It is found in the cell inner membrane. The catalysed reaction is phosphate(out) + ATP + H2O = ADP + 2 phosphate(in) + H(+). Its function is as follows. Part of the ABC transporter complex PstSACB involved in phosphate import. Responsible for energy coupling to the transport system. In Pectobacterium atrosepticum (strain SCRI 1043 / ATCC BAA-672) (Erwinia carotovora subsp. atroseptica), this protein is Phosphate import ATP-binding protein PstB 2.